The sequence spans 622 residues: Dopamine beta-hydroxylase (622 aa).

Residues 1 to 20 (MQAHLSHQPCWSSLPSPSVR) are Cytoplasmic-facing. A helical; Signal-anchor for type II membrane protein membrane pass occupies residues 21–41 (EAASMYGTAVAIFLVILVAAL). The Intragranular portion of the chain corresponds to 42–621 (RGSEPPESPF…TVPITTEADA (580 aa)). Positions 61–177 (GILELSWNVS…DTVHLVYGIL (117 aa)) constitute a DOMON domain. 2 N-linked (GlcNAc...) asparagine glycosylation sites follow: Asn-68 and Asn-188. Cystine bridges form between Cys-158–Cys-600, Cys-236–Cys-287, Cys-273–Cys-299, Cys-394–Cys-507, Cys-398–Cys-569, and Cys-470–Cys-492. Tyr-234 is an active-site residue. The Cu(2+) site is built by His-266 and His-267. His-337 lines the Cu(2+) pocket. Ser-350 carries the post-translational modification Phosphoserine; by CaMK. His-416 is a catalytic residue. His-416 and His-418 together coordinate Cu(2+). Asn-476 is a glycosylation site (N-linked (GlcNAc...) asparagine). Met-491 contacts Cu(2+). The N-linked (GlcNAc...) asparagine glycan is linked to Asn-570. A disordered region spans residues 594-622 (EEPTPRCPIRQTQSPANPTVPITTEADAE). Polar residues predominate over residues 603 to 615 (RQTQSPANPTVPI).

Belongs to the copper type II ascorbate-dependent monooxygenase family. Homotetramer; composed of two disulfide-linked dimers. The cofactor is Cu(2+). Post-translationally, proteolytic cleavage after the membrane-anchor leads to the release of the soluble form. In terms of processing, N-glycosylated. As to expression, detected in adrenal gland secretory granules (at protein level). Detected in adrenal gland.

It localises to the cytoplasmic vesicle. It is found in the secretory vesicle lumen. Its subcellular location is the secretory vesicle. The protein localises to the chromaffin granule lumen. The protein resides in the secretory vesicle membrane. It localises to the chromaffin granule membrane. The catalysed reaction is dopamine + 2 L-ascorbate + O2 = (R)-noradrenaline + 2 monodehydro-L-ascorbate radical + H2O. It participates in catecholamine biosynthesis; (R)-noradrenaline biosynthesis; (R)-noradrenaline from dopamine: step 1/1. Functionally, catalyzes the hydroxylation of dopamine to noradrenaline (also known as norepinephrine), and is thus vital for regulation of these neurotransmitters. The sequence is that of Dopamine beta-hydroxylase (Dbh) from Mus musculus (Mouse).